The following is a 351-amino-acid chain: Protein-glutamate methylesterase/protein-glutamine glutaminase 2 (351 aa).

In terms of domain architecture, Response regulatory spans 5 to 122; it reads RVICVDDSAL…RDGLLDYSEL (118 aa). Position 56 is a 4-aspartylphosphate (aspartate 56). One can recognise a CheB-type methylesterase domain in the interval 154–341; that stretch reads LNSSEKLVIL…PLPAMSERIL (188 aa). Catalysis depends on residues serine 166, histidine 192, and aspartate 289.

Belongs to the CheB family. Post-translationally, phosphorylated by CheA. Phosphorylation of the N-terminal regulatory domain activates the methylesterase activity.

Its subcellular location is the cytoplasm. It carries out the reaction [protein]-L-glutamate 5-O-methyl ester + H2O = L-glutamyl-[protein] + methanol + H(+). The catalysed reaction is L-glutaminyl-[protein] + H2O = L-glutamyl-[protein] + NH4(+). In terms of biological role, involved in chemotaxis. Part of a chemotaxis signal transduction system that modulates chemotaxis in response to various stimuli. Catalyzes the demethylation of specific methylglutamate residues introduced into the chemoreceptors (methyl-accepting chemotaxis proteins or MCP) by CheR. Also mediates the irreversible deamidation of specific glutamine residues to glutamic acid. The chain is Protein-glutamate methylesterase/protein-glutamine glutaminase 2 from Bordetella avium (strain 197N).